The chain runs to 621 residues: DnaJ homolog subfamily C member 2 (621 aa).

Met1 is subject to N-acetylmethionine. The epitope (recognized by CD8(+) cytotoxic T-lymphocytes) stretch occupies residues 23-31 (STLCQVEPV). Residues Ser47, Ser49, Ser60, and Ser63 each carry the phosphoserine modification. The 74-residue stretch at 88–161 (DHYAVLGLGH…VKRRAFNSVD (74 aa)) folds into the J domain. Positions 160 to 250 (VDPTFDNSVP…RDERRWIEKQ (91 aa)) are ZRF1-UBD. 2 disordered regions span residues 294–315 (EKKA…QRQA) and 426–453 (KEEA…GSKN). 2 consecutive SANT domains span residues 449 to 511 (NGSK…KLDP) and 549 to 604 (TDFT…EMVK).

Component of ribosome-associated complex (RAC), a heterodimer composed of Hsp70/DnaK-type chaperone HSPA14 and Hsp40/DnaJ-type chaperone DNAJC2. Interacts (via ZRF1-UBD region) with ID1. Phosphorylated in M (mitotic) phase. Widely expressed.

Its subcellular location is the nucleus. It localises to the cytoplasm. It is found in the cytosol. Functionally, acts both as a chaperone in the cytosol and as a chromatin regulator in the nucleus. When cytosolic, acts as a molecular chaperone: component of the ribosome-associated complex (RAC), a complex involved in folding or maintaining nascent polypeptides in a folding-competent state. In the RAC complex, stimulates the ATPase activity of the ribosome-associated pool of Hsp70-type chaperones HSPA14 that bind to the nascent polypeptide chain. When nuclear, mediates the switching from polycomb-repressed genes to an active state: specifically recruited at histone H2A ubiquitinated at 'Lys-119' (H2AK119ub), and promotes the displacement of the polycomb PRC1 complex from chromatin, thereby facilitating transcription activation. The chain is DnaJ homolog subfamily C member 2 (DNAJC2) from Homo sapiens (Human).